A 284-amino-acid chain; its full sequence is 4-hydroxybenzoate octaprenyltransferase (284 aa).

7 consecutive transmembrane segments (helical) span residues 33-53 (VIAA…LGVF), 93-113 (IGLF…MNPL), 136-156 (YLPQ…AWAA), 159-179 (GELP…TIAY), 209-229 (LVIG…GQHY), 231-248 (LGQS…LFVY), and 264-284 (AFLN…IAFW).

The protein belongs to the UbiA prenyltransferase family. It depends on Mg(2+) as a cofactor.

Its subcellular location is the cell inner membrane. It carries out the reaction all-trans-octaprenyl diphosphate + 4-hydroxybenzoate = 4-hydroxy-3-(all-trans-octaprenyl)benzoate + diphosphate. Its pathway is cofactor biosynthesis; ubiquinone biosynthesis. In terms of biological role, catalyzes the prenylation of para-hydroxybenzoate (PHB) with an all-trans polyprenyl group. Mediates the second step in the final reaction sequence of ubiquinone-8 (UQ-8) biosynthesis, which is the condensation of the polyisoprenoid side chain with PHB, generating the first membrane-bound Q intermediate 3-octaprenyl-4-hydroxybenzoate. In Vibrio campbellii (strain ATCC BAA-1116), this protein is 4-hydroxybenzoate octaprenyltransferase.